The primary structure comprises 81 residues: Photosystem I iron-sulfur center (81 aa).

2 4Fe-4S ferredoxin-type domains span residues 1 to 31 (MSHK…MVPW) and 39 to 68 (IASS…IRVY). [4Fe-4S] cluster contacts are provided by Cys-11, Cys-14, Cys-17, Cys-21, Cys-48, Cys-51, Cys-54, and Cys-58.

In terms of assembly, the cyanobacterial PSI reaction center is composed of one copy each of PsaA,B,C,D,E,F,I,J,K,L,M and X, and forms trimeric complexes. It depends on [4Fe-4S] cluster as a cofactor.

The protein localises to the cellular thylakoid membrane. The enzyme catalyses reduced [plastocyanin] + hnu + oxidized [2Fe-2S]-[ferredoxin] = oxidized [plastocyanin] + reduced [2Fe-2S]-[ferredoxin]. Apoprotein for the two 4Fe-4S centers FA and FB of photosystem I (PSI); essential for photochemical activity. FB is the terminal electron acceptor of PSI, donating electrons to ferredoxin. The C-terminus interacts with PsaA/B/D and helps assemble the protein into the PSI complex. Required for binding of PsaD and PsaE to PSI. PSI is a plastocyanin/cytochrome c6-ferredoxin oxidoreductase, converting photonic excitation into a charge separation, which transfers an electron from the donor P700 chlorophyll pair to the spectroscopically characterized acceptors A0, A1, FX, FA and FB in turn. The protein is Photosystem I iron-sulfur center of Rippkaea orientalis (strain PCC 8801 / RF-1) (Cyanothece sp. (strain PCC 8801)).